Consider the following 314-residue polypeptide: UDP-glucose 4-epimerase (314 aa).

NAD(+)-binding positions include 11–12 (FI), 31–36 (DNFATG), 56–57 (DI), and 77–81 (LAAQI). Substrate-binding residues include S121 and Y146. Residues Y146 and K150 each coordinate NAD(+). Y146 functions as the Proton acceptor in the catalytic mechanism. Substrate-binding positions include N175, 189–190 (VV), 204–206 (RVF), R213, and 271–274 (RLGD).

This sequence belongs to the NAD(P)-dependent epimerase/dehydratase family. Homodimer. It depends on NAD(+) as a cofactor.

It carries out the reaction UDP-alpha-D-glucose = UDP-alpha-D-galactose. It participates in carbohydrate metabolism; galactose metabolism. Involved in the metabolism of galactose. Catalyzes the conversion of UDP-galactose (UDP-Gal) to UDP-glucose (UDP-Glc) through a mechanism involving the transient reduction of NAD. The sequence is that of UDP-glucose 4-epimerase (galE1) from Mycobacterium tuberculosis (strain CDC 1551 / Oshkosh).